We begin with the raw amino-acid sequence, 251 residues long: MSDLPRHSPRRQHAGESAVTAITSPEDTTKAVVIYSGGMDSYTVLHRALRAGFEVHALSFHYGQRHSRELETAHDVCQRLGIAHQVVDIRAIHGLIGNSALTDATQTMPDGDYDADNMAATVVPNRNMILLSLAIGHAVNIGANVCFYGAHGGDHVLYPDCRPEFVERMNDVAAIADFTPVRIAAPYLHASKEEILADGLAMGLDYAQTWTCYLGAERSCGHCGSCRERLAAFAAQGVTDPLVYAGAGASD.

The segment at 1-21 (MSDLPRHSPRRQHAGESAVTA) is disordered. 35 to 45 (YSGGMDSYTVL) serves as a coordination point for ATP. Residues C212, C220, C223, and C226 each contribute to the Zn(2+) site.

The protein belongs to the QueC family. It depends on Zn(2+) as a cofactor.

It catalyses the reaction 7-carboxy-7-deazaguanine + NH4(+) + ATP = 7-cyano-7-deazaguanine + ADP + phosphate + H2O + H(+). The protein operates within purine metabolism; 7-cyano-7-deazaguanine biosynthesis. Catalyzes the ATP-dependent conversion of 7-carboxy-7-deazaguanine (CDG) to 7-cyano-7-deazaguanine (preQ(0)). The chain is 7-cyano-7-deazaguanine synthase from Chromohalobacter salexigens (strain ATCC BAA-138 / DSM 3043 / CIP 106854 / NCIMB 13768 / 1H11).